Consider the following 185-residue polypeptide: Pro-adrenomedullin (185 aa).

Positions 1 to 21 (MKLVSIALMLLGSLAVLGADT) are cleaved as a signal peptide. Arginine 41 bears the Arginine amide mark. A propeptide spanning residues 45–91 (ELQASSSYPTGLVDEKTVPTQTLGLQDKQSTSSTPQASTQSTAHIRV) is cleaved from the precursor. The interval 68-89 (GLQDKQSTSSTPQASTQSTAHI) is disordered. Low complexity predominate over residues 73-87 (QSTSSTPQASTQSTA). Cysteine 107 and cysteine 112 are oxidised to a cystine. The segment at 125–185 (TDKDKDGMAP…HQDISRVSRL (61 aa)) is disordered. The residue at position 143 (tyrosine 143) is a Tyrosine amide. Positions 150–185 (SLPEVLRARTVESSQEQTHSAPASPAHQDISRVSRL) are cleaved as a propeptide — preproAM C-terminal fragment. Polar residues predominate over residues 160 to 170 (VESSQEQTHSA).

It belongs to the adrenomedullin family. As to expression, expressed in adrenal glands, lung, kidney, heart, spleen, duodenum and submandibular glands.

It is found in the secreted. In terms of biological role, adrenomedullin/ADM and proadrenomedullin N-20 terminal peptide/PAMP are peptide hormones that act as potent hypotensive and vasodilatator agents. Numerous actions have been reported most related to the physiologic control of fluid and electrolyte homeostasis. ADM function is mediated by the CALCRL-RAMP2 and CALCRL-RAMP3 receptor complexes with ADM showing the highest potency for the CALCRL-RAMP2 complex. In Rattus norvegicus (Rat), this protein is Pro-adrenomedullin.